Consider the following 864-residue polypeptide: Probable M1 family aminopeptidase 1 (864 aa).

Residues E149 and 289-293 contribute to the substrate site; that span reads GAMEN. H325 lines the Zn(2+) pocket. E326 serves as the catalytic Proton acceptor. 2 residues coordinate Zn(2+): H329 and E348.

The protein belongs to the peptidase M1 family. Zn(2+) is required as a cofactor.

In Encephalitozoon cuniculi (strain GB-M1) (Microsporidian parasite), this protein is Probable M1 family aminopeptidase 1.